We begin with the raw amino-acid sequence, 254 residues long: Phosphatidylglycerol--prolipoprotein diacylglyceryl transferase (254 aa).

The next 4 helical transmembrane spans lie at 11–31 (LAIRWYGVVISIGAALGLLLA), 49–69 (FLIAFPSAIIGARLYYVIFEF), 84–104 (QGGLAIHGGIIFGVLAVYIYL), and 109–129 (ESFFEYVDVAAPSIILGQAIG). R130 contributes to the a 1,2-diacyl-sn-glycero-3-phospho-(1'-sn-glycerol) binding site. 3 helical membrane-spanning segments follow: residues 169–189 (PTFLYESIWNFIVCIFLVYLL), 196–216 (GIVFMAYIGLYSLGRFFIEGL), and 228–248 (VAQLISVLGIILSIFFIYNII).

Belongs to the Lgt family.

It is found in the cell membrane. The catalysed reaction is L-cysteinyl-[prolipoprotein] + a 1,2-diacyl-sn-glycero-3-phospho-(1'-sn-glycerol) = an S-1,2-diacyl-sn-glyceryl-L-cysteinyl-[prolipoprotein] + sn-glycerol 1-phosphate + H(+). It participates in protein modification; lipoprotein biosynthesis (diacylglyceryl transfer). Functionally, catalyzes the transfer of the diacylglyceryl group from phosphatidylglycerol to the sulfhydryl group of the N-terminal cysteine of a prolipoprotein, the first step in the formation of mature lipoproteins. This chain is Phosphatidylglycerol--prolipoprotein diacylglyceryl transferase, found in Clostridium botulinum (strain Langeland / NCTC 10281 / Type F).